The chain runs to 368 residues: Transaldolase (368 aa).

K140 acts as the Schiff-base intermediate with substrate in catalysis.

The protein belongs to the transaldolase family. Type 2 subfamily.

It localises to the cytoplasm. The enzyme catalyses D-sedoheptulose 7-phosphate + D-glyceraldehyde 3-phosphate = D-erythrose 4-phosphate + beta-D-fructose 6-phosphate. It participates in carbohydrate degradation; pentose phosphate pathway; D-glyceraldehyde 3-phosphate and beta-D-fructose 6-phosphate from D-ribose 5-phosphate and D-xylulose 5-phosphate (non-oxidative stage): step 2/3. In terms of biological role, transaldolase is important for the balance of metabolites in the pentose-phosphate pathway. The protein is Transaldolase of Kocuria rhizophila (strain ATCC 9341 / DSM 348 / NBRC 103217 / DC2201).